A 207-amino-acid polypeptide reads, in one-letter code: MRLMAEGLSARRGEDLIFNDISFALAAGEALVVTGPNGAGKSTLLRVLAGLLEPEGGRVRLEDGPSGFEHPRELSHYLGHRNAMKRELTVEENLTFWQRFLGDSPGGSGIGLVEAAEAVGLADIIHLPFGYLSAGQQRRMAMAKLIVAFRPIWLLDEPTAALDLSADRLFAGLVAAHLDRGGIVVAATHQPLGFAGAKSLEMTGFVH.

The ABC transporter domain occupies 3-206; the sequence is LMAEGLSARR…AKSLEMTGFV (204 aa). 35–42 lines the ATP pocket; the sequence is GPNGAGKS.

This sequence belongs to the ABC transporter superfamily. CcmA exporter (TC 3.A.1.107) family. In terms of assembly, the complex is composed of two ATP-binding proteins (CcmA) and two transmembrane proteins (CcmB).

Its subcellular location is the cell inner membrane. The catalysed reaction is heme b(in) + ATP + H2O = heme b(out) + ADP + phosphate + H(+). Its function is as follows. Part of the ABC transporter complex CcmAB involved in the biogenesis of c-type cytochromes; once thought to export heme, this seems not to be the case, but its exact role is uncertain. Responsible for energy coupling to the transport system. The polypeptide is Cytochrome c biogenesis ATP-binding export protein CcmA (Rhizobium meliloti (strain 1021) (Ensifer meliloti)).